The sequence spans 172 residues: Small ribosomal subunit protein uS5 (172 aa).

The region spanning 13 to 76 (LVEKMISVNR…EQARHNMMKI (64 aa)) is the S5 DRBM domain.

It belongs to the universal ribosomal protein uS5 family. In terms of assembly, part of the 30S ribosomal subunit. Contacts proteins S4 and S8.

In terms of biological role, with S4 and S12 plays an important role in translational accuracy. Located at the back of the 30S subunit body where it stabilizes the conformation of the head with respect to the body. The polypeptide is Small ribosomal subunit protein uS5 (Chromobacterium violaceum (strain ATCC 12472 / DSM 30191 / JCM 1249 / CCUG 213 / NBRC 12614 / NCIMB 9131 / NCTC 9757 / MK)).